Here is a 313-residue protein sequence, read N- to C-terminus: 4-hydroxy-3-methylbut-2-enyl diphosphate reductase (313 aa).

Cysteine 12 serves as a coordination point for [4Fe-4S] cluster. (2E)-4-hydroxy-3-methylbut-2-enyl diphosphate-binding residues include histidine 41 and histidine 74. Dimethylallyl diphosphate contacts are provided by histidine 41 and histidine 74. Isopentenyl diphosphate contacts are provided by histidine 41 and histidine 74. Residue cysteine 96 coordinates [4Fe-4S] cluster. Residue histidine 124 coordinates (2E)-4-hydroxy-3-methylbut-2-enyl diphosphate. Residue histidine 124 coordinates dimethylallyl diphosphate. Histidine 124 serves as a coordination point for isopentenyl diphosphate. Glutamate 126 (proton donor) is an active-site residue. Threonine 164 serves as a coordination point for (2E)-4-hydroxy-3-methylbut-2-enyl diphosphate. Residue cysteine 194 coordinates [4Fe-4S] cluster. The (2E)-4-hydroxy-3-methylbut-2-enyl diphosphate site is built by serine 222, serine 223, asparagine 224, and serine 266. Serine 222, serine 223, asparagine 224, and serine 266 together coordinate dimethylallyl diphosphate. 4 residues coordinate isopentenyl diphosphate: serine 222, serine 223, asparagine 224, and serine 266.

This sequence belongs to the IspH family. [4Fe-4S] cluster is required as a cofactor.

The enzyme catalyses isopentenyl diphosphate + 2 oxidized [2Fe-2S]-[ferredoxin] + H2O = (2E)-4-hydroxy-3-methylbut-2-enyl diphosphate + 2 reduced [2Fe-2S]-[ferredoxin] + 2 H(+). The catalysed reaction is dimethylallyl diphosphate + 2 oxidized [2Fe-2S]-[ferredoxin] + H2O = (2E)-4-hydroxy-3-methylbut-2-enyl diphosphate + 2 reduced [2Fe-2S]-[ferredoxin] + 2 H(+). The protein operates within isoprenoid biosynthesis; dimethylallyl diphosphate biosynthesis; dimethylallyl diphosphate from (2E)-4-hydroxy-3-methylbutenyl diphosphate: step 1/1. It participates in isoprenoid biosynthesis; isopentenyl diphosphate biosynthesis via DXP pathway; isopentenyl diphosphate from 1-deoxy-D-xylulose 5-phosphate: step 6/6. Catalyzes the conversion of 1-hydroxy-2-methyl-2-(E)-butenyl 4-diphosphate (HMBPP) into a mixture of isopentenyl diphosphate (IPP) and dimethylallyl diphosphate (DMAPP). Acts in the terminal step of the DOXP/MEP pathway for isoprenoid precursor biosynthesis. The chain is 4-hydroxy-3-methylbut-2-enyl diphosphate reductase from Burkholderia pseudomallei (strain 1026b).